A 464-amino-acid polypeptide reads, in one-letter code: UDP-N-acetylmuramoylalanine--D-glutamate ligase (464 aa).

112–118 is a binding site for ATP; sequence GTDGKTT.

Belongs to the MurCDEF family.

It localises to the cytoplasm. It catalyses the reaction UDP-N-acetyl-alpha-D-muramoyl-L-alanine + D-glutamate + ATP = UDP-N-acetyl-alpha-D-muramoyl-L-alanyl-D-glutamate + ADP + phosphate + H(+). The protein operates within cell wall biogenesis; peptidoglycan biosynthesis. Its function is as follows. Cell wall formation. Catalyzes the addition of glutamate to the nucleotide precursor UDP-N-acetylmuramoyl-L-alanine (UMA). The sequence is that of UDP-N-acetylmuramoylalanine--D-glutamate ligase from Chlorobium chlorochromatii (strain CaD3).